A 526-amino-acid polypeptide reads, in one-letter code: Glucose-6-phosphate isomerase (526 aa).

The Proton donor role is filled by Glu-347. Residues His-378 and Lys-493 contribute to the active site.

The protein belongs to the GPI family.

It localises to the cytoplasm. It catalyses the reaction alpha-D-glucose 6-phosphate = beta-D-fructose 6-phosphate. It participates in carbohydrate biosynthesis; gluconeogenesis. Its pathway is carbohydrate degradation; glycolysis; D-glyceraldehyde 3-phosphate and glycerone phosphate from D-glucose: step 2/4. Catalyzes the reversible isomerization of glucose-6-phosphate to fructose-6-phosphate. The sequence is that of Glucose-6-phosphate isomerase from Chlamydia pneumoniae (Chlamydophila pneumoniae).